Reading from the N-terminus, the 1025-residue chain is Leucyl-cystinyl aminopeptidase (1025 aa).

N-acetylmethionine is present on Met1. At 1–109 (MESFTNDRLQ…DGTCSLPSAR (109 aa)) the chain is on the cytoplasmic side. Residues 53–54 (LL) carry the Dileucine internalization motif motif. The residue at position 70 (Tyr70) is a Phosphotyrosine. The Dileucine internalization motif signature appears at 76–77 (LL). A phosphoserine mark is found at Ser80 and Ser91. The tankyrase binding stretch occupies residues 96–101 (RQSPDG). The helical; Signal-anchor for type II membrane protein transmembrane segment at 110 to 131 (TLVICVFVIVVAVSVIMVIYLL) threads the bilayer. Topologically, residues 132-1025 (PRCTFTKEGC…RNLKTLSQWL (894 aa)) are extracellular. Asn145, Asn184, Asn215, Asn256, and Asn266 each carry an N-linked (GlcNAc...) asparagine glycan. Glu295 is a substrate binding site. N-linked (GlcNAc...) asparagine glycosylation is found at Asn368 and Asn374. 428-432 (GAMEN) is a substrate binding site. Asn447 carries an N-linked (GlcNAc...) asparagine glycan. His464 serves as a coordination point for Zn(2+). Catalysis depends on Glu465, which acts as the Proton acceptor. Positions 468 and 487 each coordinate Zn(2+). Residues Asn525, Asn578, Asn664, Asn682, Asn695, Asn758, Asn834, Asn850, and Asn989 are each glycosylated (N-linked (GlcNAc...) asparagine).

Belongs to the peptidase M1 family. In terms of assembly, homodimer. Binds tankyrases 1 and 2. Zn(2+) is required as a cofactor.

It localises to the cell membrane. The protein resides in the endomembrane system. It catalyses the reaction Release of an N-terminal amino acid, Cys-|-Xaa-, in which the half-cystine residue is involved in a disulfide loop, notably in oxytocin or vasopressin. Hydrolysis rates on a range of aminoacyl arylamides exceed that for the cystinyl derivative, however.. Its function is as follows. Release of an N-terminal amino acid, cleave before cysteine, leucine as well as other amino acids. Degrades peptide hormones such as oxytocin, vasopressin and angiotensin III, and plays a role in maintaining homeostasis during pregnancy. May be involved in the inactivation of neuronal peptides in the brain. Cleaves Met-enkephalin and dynorphin. Binds angiotensin IV and may be the angiotensin IV receptor in the brain. The polypeptide is Leucyl-cystinyl aminopeptidase (Lnpep) (Mus musculus (Mouse)).